The sequence spans 57 residues: Toxin GhoT (57 aa).

Transmembrane regions (helical) follow at residues 7 to 27 (ILIF…FISH) and 37 to 57 (AFLV…FSLF).

Belongs to the GhoT/OrtT toxin family.

It localises to the cell inner membrane. Functionally, toxic component of a type V toxin-antitoxin (TA) system. Causes membrane damage when induced by MqsR, slowing cell growth and leading to the formation of dormant persister cells; involved with GhoS, its antitoxin, in reducing cell growth during antibacterial stress. Its toxic effects are neutralized by GhoS, which digests ghoT transcripts in a sequence-specific manner. The sequence is that of Toxin GhoT from Escherichia coli O157:H7.